Consider the following 368-residue polypeptide: tRNA-specific 2-thiouridylase MnmA (368 aa).

ATP-binding positions include 10–17 (AMSGGIDS) and M36. The Nucleophile role is filled by C106. An intrachain disulfide couples C106 to C203. G130 contacts ATP. The tract at residues 152 to 154 (KDQ) is interaction with tRNA. C203 serves as the catalytic Cysteine persulfide intermediate. An interaction with tRNA region spans residues 313-314 (RY).

Belongs to the MnmA/TRMU family.

It localises to the cytoplasm. It catalyses the reaction S-sulfanyl-L-cysteinyl-[protein] + uridine(34) in tRNA + AH2 + ATP = 2-thiouridine(34) in tRNA + L-cysteinyl-[protein] + A + AMP + diphosphate + H(+). In terms of biological role, catalyzes the 2-thiolation of uridine at the wobble position (U34) of tRNA, leading to the formation of s(2)U34. In Cytophaga hutchinsonii (strain ATCC 33406 / DSM 1761 / CIP 103989 / NBRC 15051 / NCIMB 9469 / D465), this protein is tRNA-specific 2-thiouridylase MnmA.